We begin with the raw amino-acid sequence, 242 residues long: Prosalusin (242 aa).

Residues 1 to 26 form the signal peptide; the sequence is MAAATRSCRPWGSLLGLIWLVSAAAA. The propeptide occupies 27–189; that stretch reads SWDLSSLRCN…SSWVVYGTNY (163 aa). ATP is bound at residue 93-100; the sequence is GWTGTGKS. The N-linked (GlcNAc...) asparagine glycan is linked to N149.

It belongs to the ClpA/ClpB family. Torsin subfamily.

It localises to the secreted. In terms of biological role, salusin may be a endocrine and/or paracrine factor able to increase intracellular calcium concentrations and induce cell mitogenesis. Salusin may also be a potent hypotensive peptide. This Bos taurus (Bovine) protein is Prosalusin (TOR2A).